We begin with the raw amino-acid sequence, 251 residues long: uncharacterized protein (251 aa).

The N-terminal stretch at 1-19 is a signal peptide; sequence MRYLKRITIYISLLILVSG. The N-palmitoyl cysteine moiety is linked to residue cysteine 20. Cysteine 20 carries the S-diacylglycerol cysteine lipid modification.

The protein belongs to the staphylococcal tandem lipoprotein family.

The protein resides in the cell membrane. This is an uncharacterized protein from Staphylococcus epidermidis (strain ATCC 12228 / FDA PCI 1200).